A 194-amino-acid polypeptide reads, in one-letter code: DNA replication complex GINS protein PSF3 (194 aa).

Belongs to the GINS3/PSF3 family. Component of the GINS complex which is a heterotetramer of SLD5, PSF1, PSF2 and PSF3.

Its subcellular location is the nucleus. Functions as part of the GINS complex which plays an essential role in the initiation of DNA replication by binding to DNA replication origins and facilitating the assembly of the DNA replication machinery. This is DNA replication complex GINS protein PSF3 from Saccharomyces cerevisiae (strain ATCC 204508 / S288c) (Baker's yeast).